The primary structure comprises 452 residues: Phosphoglucosamine mutase (452 aa).

The active-site Phosphoserine intermediate is serine 101. Positions 101, 241, 243, and 245 each coordinate Mg(2+). Serine 101 is modified (phosphoserine).

Belongs to the phosphohexose mutase family. Requires Mg(2+) as cofactor. Post-translationally, activated by phosphorylation.

The catalysed reaction is alpha-D-glucosamine 1-phosphate = D-glucosamine 6-phosphate. Its function is as follows. Catalyzes the conversion of glucosamine-6-phosphate to glucosamine-1-phosphate. In Lactococcus lactis subsp. cremoris (strain MG1363), this protein is Phosphoglucosamine mutase.